A 1437-amino-acid chain; its full sequence is MAAMQPAAQLQFQNLMSPSGPSLPQPTPIHQEKVAKLCPQLQHDFYPSEELAVLPSQEVPRLRAVVESQAFRNILVDEMDMMVSRAATVIQASWKGYRLRQKLISQMTAAKAIQEAWRRFSTRRLMHSNRLTVKKAKREDEEDIPYHQPQQVRFHAPEDQPPVMVTKETQFPSFDNLVPSQATAGPCASRVPGGGLHPQYVINRLTVPKYQPCMLTKTFRSSCLMRHLEGDSLKIRHVASKTIKVGALEAAATGRYGQAMHGSLKTQTQAHTESDVPKAPLRIYPVNKTHTKVCPMAAAVPESSATMSTAPRSAPQARPTSPATVMKMQATTSPTSPVIRLPAPVGPNSSLSNTTPQMQVRYMMPGARIQPPGSAVASTIKALPHFGAPVMKVPLQTGPGFTMTKTSLQMRPMTRSQAQTYTVSTSSKTSPSSPTVKPSPQTRLAAMLTKTPAQLRSVAAVFRTLCGGTTEAVASSPRCSPQSPVVAGNTPSQVHLNSTRTKVTVSTKQATTVVKVNSQSYLGRCGSQGNLDTIVPKPPATYPLEVEKMKSCPARSPKKEAALKTNTTIAARALSWTKMMEDRSKALTQIKQRAEIIKVHFRVYMPEEIPVTLTQAQLAVPLTKSSSQIQPPPCHARTQPTSPFCKAVSQSCMPSGLAHGTPEGQRPPVGLSASLSSSPLAAHLMSLTAQLQPACEQARSVSRDHLTRSCPASASLQARSSGTIVPPEVYPNTYSPTSAPQHHMASLLAKSSSQLHPPAEHAKTMNTKTTKAACQVCPSTKLSKAPSLAQLITCLAKVPSQAQLATETAKCLLAAHPTTDHRSKTQSQTFLSSSKASVQLWQHLGTLSTGSRAKPDDRSVAQPQLHSHAPNKTMQNPRSVVTDSQGMLIPLMTPSGHPVCNAESWGDSGRAQTPPPSPVPNQAVPCHDDLAASVASLCADLVAMLGSPEDLRTLLVKTLSQGEVRTALSQALSREVLGPSVVKALPQGMLGMALMKALSWGELGISLSRALSRGELRPELNKATQGKLAEVLCKALTEEERATLSQALCQGELGAVFTQSLAQMAQRTGTFLPKATSKTVGSRMTTAPAPVEVTCSGSLSVAWGPAMGPVGARCSKGPVDAGLASGQSWNSKVPNVSVRATAHAGAPQGVWYPSRGHKPWDPIGAEAELDRKPSAELLMSVQGMEKVVVQAVVTIQACARGYLVRRTVKVWHQWATIIQATWRGYRVRRNLERLFRATTIIQAAWRGYCIRRARARQVLLPIAWPEHSGRTKGTLDNRNSSEHRCFLSCQPDVCSVCQSLGPPVESPPSVVMLVGSQPRTCHVCGHTLSTRVVQGFGQGISGQPVSRWASASQQNTLLSQQHRACTIIQAAWKGYRTRRQLSQKQSAAKMVQAVWRGHYTRSCLTTDALLGTGGPWSISRDTSRHSSRAYSLHWPGV.

The region spanning 84–112 (SRAATVIQASWKGYRLRQKLISQMTAAKA) is the IQ 1 domain. Disordered regions lie at residues 332–353 (TSPT…SLSN), 416–440 (SQAQ…KPSP), and 848–878 (STGS…QNPR). The segment covering 422 to 440 (TVSTSSKTSPSSPTVKPSP) has biased composition (low complexity). A compositionally biased stretch (polar residues) spans 861–878 (AQPQLHSHAPNKTMQNPR). IQ domains follow at residues 1190–1216 (QAVV…QWAT), 1217–1239 (IIQA…RATT), 1240–1258 (IIQA…ARQV), 1361–1389 (QHRA…SAAK), and 1390–1413 (MVQA…LGTG).

In terms of assembly, interacts with calmodulin. In terms of tissue distribution, expressed in testis, in elongating spermatids (at protein level).

Functionally, essential for spermiogenesis and fertilization. May be required for manchette assembly in elongating spermatids. This chain is IQ domain-containing protein N (Iqcn), found in Mus musculus (Mouse).